The primary structure comprises 1408 residues: DNA-directed RNA polymerase subunit beta' (1408 aa).

Positions 70, 72, 85, and 88 each coordinate Zn(2+). Residues Asp-460, Asp-462, and Asp-464 each coordinate Mg(2+). Cys-814, Cys-888, Cys-895, and Cys-898 together coordinate Zn(2+).

The protein belongs to the RNA polymerase beta' chain family. In terms of assembly, the RNAP catalytic core consists of 2 alpha, 1 beta, 1 beta' and 1 omega subunit. When a sigma factor is associated with the core the holoenzyme is formed, which can initiate transcription. It depends on Mg(2+) as a cofactor. The cofactor is Zn(2+).

It carries out the reaction RNA(n) + a ribonucleoside 5'-triphosphate = RNA(n+1) + diphosphate. DNA-dependent RNA polymerase catalyzes the transcription of DNA into RNA using the four ribonucleoside triphosphates as substrates. The protein is DNA-directed RNA polymerase subunit beta' of Shewanella frigidimarina (strain NCIMB 400).